The chain runs to 501 residues: L-arabinose isomerase (501 aa).

Positions 306, 333, 350, and 450 each coordinate Mn(2+).

It belongs to the arabinose isomerase family. In terms of assembly, homohexamer. The cofactor is Mn(2+).

The enzyme catalyses beta-L-arabinopyranose = L-ribulose. It functions in the pathway carbohydrate degradation; L-arabinose degradation via L-ribulose; D-xylulose 5-phosphate from L-arabinose (bacterial route): step 1/3. In terms of biological role, catalyzes the conversion of L-arabinose to L-ribulose. The chain is L-arabinose isomerase from Pectobacterium carotovorum subsp. carotovorum (strain PC1).